The following is a 410-amino-acid chain: Cysteine desulfurase IscS (410 aa).

Pyridoxal 5'-phosphate contacts are provided by residues 80–81 (AT), N160, Q188, and 208–210 (SGH). Position 211 is an N6-(pyridoxal phosphate)lysine (K211). Pyridoxal 5'-phosphate is bound at residue T248. C334 serves as the catalytic Cysteine persulfide intermediate. Residue C334 coordinates [2Fe-2S] cluster.

The protein belongs to the class-V pyridoxal-phosphate-dependent aminotransferase family. NifS/IscS subfamily. As to quaternary structure, homodimer. Forms a heterotetramer with IscU, interacts with other sulfur acceptors. Requires pyridoxal 5'-phosphate as cofactor.

Its subcellular location is the cytoplasm. It carries out the reaction (sulfur carrier)-H + L-cysteine = (sulfur carrier)-SH + L-alanine. It participates in cofactor biosynthesis; iron-sulfur cluster biosynthesis. Master enzyme that delivers sulfur to a number of partners involved in Fe-S cluster assembly, tRNA modification or cofactor biosynthesis. Catalyzes the removal of elemental sulfur atoms from cysteine to produce alanine. Functions as a sulfur delivery protein for Fe-S cluster synthesis onto IscU, an Fe-S scaffold assembly protein, as well as other S acceptor proteins. The sequence is that of Cysteine desulfurase IscS from Rickettsia rickettsii (strain Iowa).